Here is a 946-residue protein sequence, read N- to C-terminus: Bifunctional glutamine synthetase adenylyltransferase/adenylyl-removing enzyme (946 aa).

Residues 1 to 440 (MKPLSSPLQQ…VFNELIGDDE (440 aa)) are adenylyl removase. Residues 449–946 (SEQWRELWQD…ASWQKWLVEE (498 aa)) are adenylyl transferase.

Belongs to the GlnE family. Mg(2+) serves as cofactor.

The enzyme catalyses [glutamine synthetase]-O(4)-(5'-adenylyl)-L-tyrosine + phosphate = [glutamine synthetase]-L-tyrosine + ADP. It carries out the reaction [glutamine synthetase]-L-tyrosine + ATP = [glutamine synthetase]-O(4)-(5'-adenylyl)-L-tyrosine + diphosphate. Functionally, involved in the regulation of glutamine synthetase GlnA, a key enzyme in the process to assimilate ammonia. When cellular nitrogen levels are high, the C-terminal adenylyl transferase (AT) inactivates GlnA by covalent transfer of an adenylyl group from ATP to specific tyrosine residue of GlnA, thus reducing its activity. Conversely, when nitrogen levels are low, the N-terminal adenylyl removase (AR) activates GlnA by removing the adenylyl group by phosphorolysis, increasing its activity. The regulatory region of GlnE binds the signal transduction protein PII (GlnB) which indicates the nitrogen status of the cell. In Shigella boydii serotype 4 (strain Sb227), this protein is Bifunctional glutamine synthetase adenylyltransferase/adenylyl-removing enzyme.